The primary structure comprises 318 residues: Biotin synthase (318 aa).

The Radical SAM core domain maps to 36-258; sequence HDPREVQLCT…VATTRILFPD (223 aa). Cys-54, Cys-58, and Cys-61 together coordinate [4Fe-4S] cluster. Residues Cys-98, Cys-130, Cys-190, and Arg-262 each coordinate [2Fe-2S] cluster.

Belongs to the radical SAM superfamily. Biotin synthase family. As to quaternary structure, homodimer. Requires [4Fe-4S] cluster as cofactor. It depends on [2Fe-2S] cluster as a cofactor.

It catalyses the reaction (4R,5S)-dethiobiotin + (sulfur carrier)-SH + 2 reduced [2Fe-2S]-[ferredoxin] + 2 S-adenosyl-L-methionine = (sulfur carrier)-H + biotin + 2 5'-deoxyadenosine + 2 L-methionine + 2 oxidized [2Fe-2S]-[ferredoxin]. It functions in the pathway cofactor biosynthesis; biotin biosynthesis; biotin from 7,8-diaminononanoate: step 2/2. Functionally, catalyzes the conversion of dethiobiotin (DTB) to biotin by the insertion of a sulfur atom into dethiobiotin via a radical-based mechanism. The polypeptide is Biotin synthase (Gloeobacter violaceus (strain ATCC 29082 / PCC 7421)).